The chain runs to 403 residues: Acetyl-CoA acetyltransferase IB (403 aa).

Residue Cys91 is the Acyl-thioester intermediate of the active site. Active-site proton acceptor residues include His353 and Cys383. The Microbody targeting signal signature appears at 401-403 (AKL).

Belongs to the thiolase-like superfamily. Thiolase family. Multimeric.

Its subcellular location is the peroxisome. It carries out the reaction 2 acetyl-CoA = acetoacetyl-CoA + CoA. It participates in metabolic intermediate biosynthesis; (R)-mevalonate biosynthesis; (R)-mevalonate from acetyl-CoA: step 1/3. The chain is Acetyl-CoA acetyltransferase IB (PACTB) from Candida tropicalis (Yeast).